A 314-amino-acid polypeptide reads, in one-letter code: WD repeat domain-containing protein 83 (314 aa).

WD repeat units lie at residues Cys-23–Thr-62, Gly-65–Lys-104, Gly-107–Ile-146, Glu-151–Asp-188, Tyr-189–Glu-228, Gly-231–Lys-272, and Val-275–Gly-313.

Belongs to the WD repeat MORG1 family.

Its subcellular location is the cytoplasm. In terms of biological role, molecular scaffold protein for various multimeric protein complexes. Acts as a module in the assembly of a multicomponent scaffold for the ERK pathway, linking ERK responses to specific agonists. Also involved in response to hypoxia by acting as a negative regulator of HIF1A/HIF-1-alpha. This is WD repeat domain-containing protein 83 (wdr83) from Xenopus tropicalis (Western clawed frog).